The primary structure comprises 383 residues: Pantothenate kinase 1 (383 aa).

This sequence belongs to the type II pantothenate kinase family. Highly expressed in leaves and developing seeds. Expressed in roots, stems and flowers.

It carries out the reaction (R)-pantothenate + ATP = (R)-4'-phosphopantothenate + ADP + H(+). It participates in cofactor biosynthesis; coenzyme A biosynthesis; CoA from (R)-pantothenate: step 1/5. With respect to regulation, regulated by feedback inhibition by malonyl-CoA. Its function is as follows. Catalyzes the phosphorylation of pantothenate the first step in CoA biosynthesis. May play a role in the physiological regulation of the intracellular CoA concentration. Functionally redudant with PANK2. The protein is Pantothenate kinase 1 (PANK1) of Arabidopsis thaliana (Mouse-ear cress).